A 330-amino-acid polypeptide reads, in one-letter code: MTPDWHSSLILTAYILIFLTGLPANLLALRAFMGRVRQPQPAPVHILLLNLTLADLLLLLLLPFRIVEAASNFRWYLPKIVCALTGFGFYSSIYCSTWLLAGISMERYLGVAFPVQYKLSRRPLYGVIAALVAWIMSFGHCTIVIIVQYLNSTEQVGTENQITCYENFTQEQLDVVLPVRLELCLVLFFVPMAVTIFCYWRFVWIMLTQPHVGAQRRRRAVGLAVVTLLNFLVCFGPYNMSHLVGFYLRQSPSWRVEAVVFSSLNASLDPLLFYFSSSVVRRAFGKGLLLIRNPASSMLGRGAKETVEGTKMDRGGSQAEGVQSSEFVTE.

Residues 1 to 8 (MTPDWHSS) lie on the Extracellular side of the membrane. A helical membrane pass occupies residues 9 to 29 (LILTAYILIFLTGLPANLLAL). Residues 30 to 43 (RAFMGRVRQPQPAP) lie on the Cytoplasmic side of the membrane. The chain crosses the membrane as a helical span at residues 44 to 64 (VHILLLNLTLADLLLLLLLPF). At 65 to 79 (RIVEAASNFRWYLPK) the chain is on the extracellular side. The chain crosses the membrane as a helical span at residues 80 to 100 (IVCALTGFGFYSSIYCSTWLL). At 101 to 126 (AGISMERYLGVAFPVQYKLSRRPLYG) the chain is on the cytoplasmic side. Residues 127-147 (VIAALVAWIMSFGHCTIVIIV) traverse the membrane as a helical segment. Residues 148 to 184 (QYLNSTEQVGTENQITCYENFTQEQLDVVLPVRLELC) are Extracellular-facing. N-linked (GlcNAc...) asparagine glycosylation is found at Asn-151 and Asn-167. Residues 185-205 (LVLFFVPMAVTIFCYWRFVWI) traverse the membrane as a helical segment. Residues 206–219 (MLTQPHVGAQRRRR) lie on the Cytoplasmic side of the membrane. Residues 220–240 (AVGLAVVTLLNFLVCFGPYNM) traverse the membrane as a helical segment. Over 241–255 (SHLVGFYLRQSPSWR) the chain is Extracellular. Residues 256–276 (VEAVVFSSLNASLDPLLFYFS) traverse the membrane as a helical segment. The Cytoplasmic portion of the chain corresponds to 277 to 330 (SSVVRRAFGKGLLLIRNPASSMLGRGAKETVEGTKMDRGGSQAEGVQSSEFVTE). The segment at 306–330 (TVEGTKMDRGGSQAEGVQSSEFVTE) is disordered. Residues 320 to 330 (EGVQSSEFVTE) are compositionally biased toward polar residues.

Belongs to the G-protein coupled receptor 1 family. In terms of assembly, interacts with FCN1 (via Fibrinogen C-terminal domain). In terms of tissue distribution, highly expressed in hematopoietic tissues, such as spleen and bone marrow, with highest levels in a subset of immune cells, including monocytes or neutrophils. Expressed in adipose tissues with high expression in differentiating adipocytes. Expressed by intestinal endocrine cells.

The protein resides in the cell membrane. Functionally, g protein-coupled receptor that is activated by a major product of dietary fiber digestion, the short chain fatty acids (SCFAs), and that plays a role in the regulation of whole-body energy homeostasis and in intestinal immunity. In omnivorous mammals, the short chain fatty acids acetate, propionate and butyrate are produced primarily by the gut microbiome that metabolizes dietary fibers. SCFAs serve as a source of energy but also act as signaling molecules. That G protein-coupled receptor is probably coupled to the pertussis toxin-sensitive, G(i/o)-alpha family of G proteins but also to the Gq family. Its activation results in the formation of inositol 1,4,5-trisphosphate, the mobilization of intracellular calcium, the phosphorylation of the MAPK3/ERK1 and MAPK1/ERK2 kinases and the inhibition of intracellular cAMP accumulation. May play a role in glucose homeostasis by regulating the secretion of GLP-1, in response to short-chain fatty acids accumulating in the intestine. May also regulate the production of LEP/Leptin, a hormone acting on the central nervous system to inhibit food intake. Finally, may also regulate whole-body energy homeostasis through adipogenesis regulating both differentiation and lipid storage of adipocytes. In parallel to its role in energy homeostasis, may also mediate the activation of the inflammatory and immune responses by SCFA in the intestine, regulating the rapid production of chemokines and cytokines. May also play a role in the resolution of the inflammatory response and control chemotaxis in neutrophils. In addition to SCFAs, may also be activated by the extracellular lectin FCN1 in a process leading to activation of monocytes and inducing the secretion of interleukin-8/IL-8 in response to the presence of microbes. The protein is Free fatty acid receptor 2 (Ffar2) of Mus musculus (Mouse).